The following is an 84-amino-acid chain: ATP synthase subunit c (84 aa).

The next 2 membrane-spanning stretches (helical) occupy residues 9–29 (IIGASILLAFAALGTAIGFAI) and 54–74 (IVAGLLDAIAMIAVGISLLFI).

The protein belongs to the ATPase C chain family. As to quaternary structure, F-type ATPases have 2 components, F(1) - the catalytic core - and F(0) - the membrane proton channel. F(1) has five subunits: alpha(3), beta(3), gamma(1), delta(1), epsilon(1). F(0) has three main subunits: a(1), b(2) and c(10-14). The alpha and beta chains form an alternating ring which encloses part of the gamma chain. F(1) is attached to F(0) by a central stalk formed by the gamma and epsilon chains, while a peripheral stalk is formed by the delta and b chains.

The protein localises to the cell inner membrane. Functionally, f(1)F(0) ATP synthase produces ATP from ADP in the presence of a proton or sodium gradient. F-type ATPases consist of two structural domains, F(1) containing the extramembraneous catalytic core and F(0) containing the membrane proton channel, linked together by a central stalk and a peripheral stalk. During catalysis, ATP synthesis in the catalytic domain of F(1) is coupled via a rotary mechanism of the central stalk subunits to proton translocation. Its function is as follows. Key component of the F(0) channel; it plays a direct role in translocation across the membrane. A homomeric c-ring of between 10-14 subunits forms the central stalk rotor element with the F(1) delta and epsilon subunits. This is ATP synthase subunit c from Actinobacillus pleuropneumoniae serotype 7 (strain AP76).